Consider the following 202-residue polypeptide: Thymidylate kinase (202 aa).

7–14 (GIDGSGKT) serves as a coordination point for ATP.

The protein belongs to the thymidylate kinase family.

The catalysed reaction is dTMP + ATP = dTDP + ADP. In terms of biological role, phosphorylation of dTMP to form dTDP in both de novo and salvage pathways of dTTP synthesis. The protein is Thymidylate kinase of Ehrlichia chaffeensis (strain ATCC CRL-10679 / Arkansas).